A 451-amino-acid chain; its full sequence is Phosphoglucosamine mutase (451 aa).

The Phosphoserine intermediate role is filled by Ser101. 4 residues coordinate Mg(2+): Ser101, Asp240, Asp242, and Asp244. A Phosphoserine modification is found at Ser101.

It belongs to the phosphohexose mutase family. It depends on Mg(2+) as a cofactor. Activated by phosphorylation.

The catalysed reaction is alpha-D-glucosamine 1-phosphate = D-glucosamine 6-phosphate. Functionally, catalyzes the conversion of glucosamine-6-phosphate to glucosamine-1-phosphate. The protein is Phosphoglucosamine mutase of Nitrosococcus oceani (strain ATCC 19707 / BCRC 17464 / JCM 30415 / NCIMB 11848 / C-107).